The primary structure comprises 96 residues: Protein Vpr (96 aa).

Residues 1 to 42 (MEQAPEDQGPQREPYNEWTLELLEELKNEAVRHFPRIWLHSL) are homooligomerization. S79, S94, and S96 each carry phosphoserine; by host.

The protein belongs to the HIV-1 VPR protein family. In terms of assembly, homooligomer, may form homodimer. Interacts with p6-gag region of the Pr55 Gag precursor protein through a (Leu-X-X)4 motif near the C-terminus of the P6gag protein. Interacts with host UNG. May interact with host RAD23A/HHR23A. Interacts with host VPRBP/DCAF1, leading to hijack the CUL4A-RBX1-DDB1-DCAF1/VPRBP complex, mediating ubiquitination of host proteins such as TERT and ZGPAT and arrest of the cell cycle in G2 phase. In terms of processing, phosphorylated on several residues by host. These phosphorylations regulate VPR activity for the nuclear import of the HIV-1 pre-integration complex.

The protein localises to the virion. It is found in the host nucleus. Its subcellular location is the host extracellular space. During virus replication, may deplete host UNG protein, and incude G2-M cell cycle arrest. Acts by targeting specific host proteins for degradation by the 26S proteasome, through association with the cellular CUL4A-DDB1 E3 ligase complex by direct interaction with host VPRPB/DCAF-1. Cell cycle arrest reportedly occurs within hours of infection and is not blocked by antiviral agents, suggesting that it is initiated by the VPR carried into the virion. Additionally, VPR induces apoptosis in a cell cycle dependent manner suggesting that these two effects are mechanistically linked. Detected in the serum and cerebrospinal fluid of AIDS patient, VPR may also induce cell death to bystander cells. In terms of biological role, during virus entry, plays a role in the transport of the viral pre-integration (PIC) complex to the host nucleus. This function is crucial for viral infection of non-dividing macrophages. May act directly at the nuclear pore complex, by binding nucleoporins phenylalanine-glycine (FG)-repeat regions. This is Protein Vpr from Homo sapiens (Human).